The primary structure comprises 35 residues: Basic endochitinase CH1 (35 aa).

The protein belongs to the glycosyl hydrolase 19 family. Chitinase class I subfamily.

The catalysed reaction is Random endo-hydrolysis of N-acetyl-beta-D-glucosaminide (1-&gt;4)-beta-linkages in chitin and chitodextrins.. Its function is as follows. Defense against chitin-containing fungal pathogens. The sequence is that of Basic endochitinase CH1 from Castanea sativa (Sweet chestnut).